A 1012-amino-acid polypeptide reads, in one-letter code: Structural polyprotein (1012 aa).

Aspartate 30 contributes to the a divalent metal cation binding site. The region spanning 513–755 is the Peptidase S50 domain; sequence ADKGYEVVAN…AGRQYHLAMA (243 aa). Serine 652 acts as the Nucleophile in catalysis. The active site involves lysine 692. The segment at 970 to 1012 is disordered; it reads MEMKHRNPRRALPKPKPKPNAPTQRPPGRLGRWIRTVSDEDLE. A compositionally biased stretch (basic residues) spans 975 to 986; that stretch reads RNPRRALPKPKP. The tract at residues 1003–1012 is interaction with VP1 protein; the sequence is IRTVSDEDLE.

As to quaternary structure, homotrimer. A central divalent metal stabilizes the VP2 trimer. Interacts with host ITGA4/ITGB1. In terms of assembly, homodimer. Interacts (via C-terminus) with VP1 in the cytoplasm. Interacts with VP2. Post-translationally, specific enzymatic cleavages yield mature proteins. The capsid assembly seems to be regulated by polyprotein processing. The protease VP4 cleaves itself off the polyprotein, thus releasing pre-VP2 and VP3 within the infected cell. During capsid assembly, the C-terminus of pre-VP2 is further processed by VP4, giving rise to VP2, the external capsid protein and three small peptides that all stay closely associated with the capsid.

It is found in the virion. It localises to the host cytoplasm. Capsid protein VP2 self assembles to form an icosahedral capsid with a T=13 symmetry, about 70 nm in diameter, and consisting of 260 VP2 trimers. The capsid encapsulates the genomic dsRNA. VP2 is also involved in attachment and entry into the host cell by interacting with host ITGA4/ITGB1. In terms of biological role, the precursor of VP2 plays an important role in capsid assembly. First, pre-VP2 and VP2 oligomers assemble to form a procapsid. Then, the pre-VP2 intermediates may be processed into VP2 proteins by proteolytic cleavage mediated by VP4 to obtain the mature virion. The final capsid is composed of pentamers and hexamers but VP2 has a natural tendency to assemble into all-pentameric structures. Therefore pre-VP2 may be required to allow formation of the hexameric structures. Functionally, protease VP4 is a serine protease that cleaves the polyprotein into its final products. Pre-VP2 is first partially cleaved, and may be completely processed by VP4 upon capsid maturation. Its function is as follows. Capsid protein VP3 plays a key role in virion assembly by providing a scaffold for the capsid made of VP2. May self-assemble to form a T=4-like icosahedral inner-capsid composed of at least 180 trimers. Plays a role in genomic RNA packaging by recruiting VP1 into the capsid and interacting with the dsRNA genome segments to form a ribonucleoprotein complex. Additionally, the interaction of the VP3 C-terminal tail with VP1 removes the inherent structural blockade of the polymerase active site. Thus, VP3 can also function as a transcriptional activator. Structural peptide 1 is a small peptide derived from pre-VP2 C-terminus. It destabilizes and perforates cell membranes, suggesting a role during entry. In terms of biological role, structural peptide 2 is a small peptide derived from pVP2 C-terminus. It is not essential for the virus viability, but viral growth is affected when missing. Functionally, structural peptide 3 is a small peptide derived from pVP2 C-terminus. It is not essential for the virus viability, but viral growth is affected when missing. Its function is as follows. Structural peptide 4 is a small peptide derived from pVP2 C-terminus. It is essential for the virus viability. The protein is Structural polyprotein of Avian infectious bursal disease virus (strain Chicken/Cuba/Soroa/1998) (IBDV).